Consider the following 159-residue polypeptide: Cytochrome c-type biogenesis protein CcmE (159 aa).

At 1 to 7 (MTRKGRR) the chain is on the cytoplasmic side. A helical; Signal-anchor for type II membrane protein transmembrane segment spans residues 8-28 (LVLIGAGLGVLALAAGLILSA). The Periplasmic segment spans residues 29 to 159 (LNDTIVFFRS…AAPVQRAPGS (131 aa)). Residues histidine 121 and tyrosine 125 each contribute to the heme site. The tract at residues 134 to 159 (LKKQGRWQEGGPAPGTAAPVQRAPGS) is disordered.

The protein belongs to the CcmE/CycJ family.

Its subcellular location is the cell inner membrane. Heme chaperone required for the biogenesis of c-type cytochromes. Transiently binds heme delivered by CcmC and transfers the heme to apo-cytochromes in a process facilitated by CcmF and CcmH. This is Cytochrome c-type biogenesis protein CcmE from Xanthobacter autotrophicus (strain ATCC BAA-1158 / Py2).